Here is a 414-residue protein sequence, read N- to C-terminus: Putative competence-damage inducible protein (414 aa).

This sequence belongs to the CinA family.

This is Putative competence-damage inducible protein from Moorella thermoacetica (strain ATCC 39073 / JCM 9320).